The following is a 420-amino-acid chain: Exodeoxyribonuclease 7 large subunit (420 aa).

This sequence belongs to the XseA family. As to quaternary structure, heterooligomer composed of large and small subunits.

Its subcellular location is the cytoplasm. The catalysed reaction is Exonucleolytic cleavage in either 5'- to 3'- or 3'- to 5'-direction to yield nucleoside 5'-phosphates.. In terms of biological role, bidirectionally degrades single-stranded DNA into large acid-insoluble oligonucleotides, which are then degraded further into small acid-soluble oligonucleotides. This Helicobacter acinonychis (strain Sheeba) protein is Exodeoxyribonuclease 7 large subunit.